Consider the following 210-residue polypeptide: MKTLGKLIASKLIEVKAIKLQPNNPFTWASGWKAPIYCDNRKTLSYPQIRSLIKLELARVISETFGDVEAIAGVATGAIAQGALVADLLGLPFVYVRSSPKDHGLENLVEGELKPNSKVVVIEDLISTGGSSLKAAEAIRNFGCEVLGMVAVYTHGFPMAEQNFEKAEVKLVTLTDYDQVIEEALRTGYISAENVELLREWRKSPETWGI.

5-phospho-alpha-D-ribose 1-diphosphate contacts are provided by residues Arg97, Lys101, His103, and 123 to 131 (EDLISTGGS). Ser127 contributes to the orotate binding site.

It belongs to the purine/pyrimidine phosphoribosyltransferase family. PyrE subfamily. In terms of assembly, homodimer. Mg(2+) is required as a cofactor.

It carries out the reaction orotidine 5'-phosphate + diphosphate = orotate + 5-phospho-alpha-D-ribose 1-diphosphate. It participates in pyrimidine metabolism; UMP biosynthesis via de novo pathway; UMP from orotate: step 1/2. Functionally, catalyzes the transfer of a ribosyl phosphate group from 5-phosphoribose 1-diphosphate to orotate, leading to the formation of orotidine monophosphate (OMP). In Porphyromonas gingivalis (strain ATCC BAA-308 / W83), this protein is Orotate phosphoribosyltransferase.